The following is a 955-amino-acid chain: Glycine dehydrogenase (decarboxylating) (955 aa).

K702 bears the N6-(pyridoxal phosphate)lysine mark.

This sequence belongs to the GcvP family. The glycine cleavage system is composed of four proteins: P, T, L and H. Pyridoxal 5'-phosphate is required as a cofactor.

It carries out the reaction N(6)-[(R)-lipoyl]-L-lysyl-[glycine-cleavage complex H protein] + glycine + H(+) = N(6)-[(R)-S(8)-aminomethyldihydrolipoyl]-L-lysyl-[glycine-cleavage complex H protein] + CO2. Functionally, the glycine cleavage system catalyzes the degradation of glycine. The P protein binds the alpha-amino group of glycine through its pyridoxal phosphate cofactor; CO(2) is released and the remaining methylamine moiety is then transferred to the lipoamide cofactor of the H protein. The protein is Glycine dehydrogenase (decarboxylating) of Stenotrophomonas maltophilia (strain R551-3).